The following is a 351-amino-acid chain: Nicotinate-nucleotide--dimethylbenzimidazole phosphoribosyltransferase (351 aa).

Residue Glu-315 is the Proton acceptor of the active site.

Belongs to the CobT family.

It carries out the reaction 5,6-dimethylbenzimidazole + nicotinate beta-D-ribonucleotide = alpha-ribazole 5'-phosphate + nicotinate + H(+). Its pathway is nucleoside biosynthesis; alpha-ribazole biosynthesis; alpha-ribazole from 5,6-dimethylbenzimidazole: step 1/2. Its function is as follows. Catalyzes the synthesis of alpha-ribazole-5'-phosphate from nicotinate mononucleotide (NAMN) and 5,6-dimethylbenzimidazole (DMB). This is Nicotinate-nucleotide--dimethylbenzimidazole phosphoribosyltransferase from Acetivibrio thermocellus (strain ATCC 27405 / DSM 1237 / JCM 9322 / NBRC 103400 / NCIMB 10682 / NRRL B-4536 / VPI 7372) (Clostridium thermocellum).